The chain runs to 224 residues: tRNA (guanine-N(7)-)-methyltransferase (224 aa).

S-adenosyl-L-methionine contacts are provided by glutamate 57, aspartate 82, and aspartate 109. Residue aspartate 167 participates in substrate binding.

This sequence belongs to the class I-like SAM-binding methyltransferase superfamily. TrmB family.

It carries out the reaction guanosine(46) in tRNA + S-adenosyl-L-methionine = N(7)-methylguanosine(46) in tRNA + S-adenosyl-L-homocysteine. Its pathway is tRNA modification; N(7)-methylguanine-tRNA biosynthesis. Its function is as follows. Catalyzes the formation of N(7)-methylguanine at position 46 (m7G46) in tRNA. This is tRNA (guanine-N(7)-)-methyltransferase from Chloroflexus aurantiacus (strain ATCC 29366 / DSM 635 / J-10-fl).